A 492-amino-acid polypeptide reads, in one-letter code: MVLYTRPPRLSVSRETFFGRQTPVVIPVFKEGDSIKLPEGLPQDLESLLKESYNSKAVSPEPGSVAKLPYRGGLVVTAGCGAPGDLEGVRRGFAAASRQVVDSFEEAQLYLVGLDTVSSTEAVIGALLGAYRLEEFKNTRKRKLQQLWVYGGEPRLDYAQAVAEGVYLARDIANAPPHRLPPAKLAAAVEDLFSKFDNVDVEVFSYDRLLEEGFGGIVSVGMGSEEKPRLIIIKYRGGAGEPIALVGKAVVFDSGGINLKPSQGMTLMRADKAGGAAVVGAMWTAARLGIKASIIGLIPAVINVPSGSSYLPSDVIRMWDGTMVEITNTDAEGRLILADAISYAAKQLGAKTVIDLATLTGAIVVALGPLIAGLFTRSDGLARAFEEASRTTGEKIWRMPMEDEYAKSLTQPAQAGEIVNAAQRYGGAIFGALFLERFVHGKEFAHLDIAGPGIAFEAGSLAPPYWPEKGMAPGYGVRLLIEVLSRMARGGG.

Mn(2+) is bound by residues K248 and D253. K260 is a catalytic residue. Mn(2+) is bound by residues D271, D330, and E332. R334 is an active-site residue.

Belongs to the peptidase M17 family. The cofactor is Mn(2+).

It localises to the cytoplasm. It catalyses the reaction Release of an N-terminal amino acid, Xaa-|-Yaa-, in which Xaa is preferably Leu, but may be other amino acids including Pro although not Arg or Lys, and Yaa may be Pro. Amino acid amides and methyl esters are also readily hydrolyzed, but rates on arylamides are exceedingly low.. The catalysed reaction is Release of an N-terminal amino acid, preferentially leucine, but not glutamic or aspartic acids.. Presumably involved in the processing and regular turnover of intracellular proteins. Catalyzes the removal of unsubstituted N-terminal amino acids from various peptides. The protein is Probable cytosol aminopeptidase (pepA) of Aeropyrum pernix (strain ATCC 700893 / DSM 11879 / JCM 9820 / NBRC 100138 / K1).